Consider the following 122-residue polypeptide: MNAVAEAPATEDVPAPFVFTDSAADKVKQLIEEEGNAELKLRVFVQGGGCSGFQYGFTFDEDVNEDDTTMVKNGVTLLIDSMSYQYLVGAEIDYKEDINGAQFVIKNPNASTTCGCGSSFSV.

Iron-sulfur cluster is bound by residues C50, C114, and C116.

This sequence belongs to the HesB/IscA family. As to quaternary structure, homodimer. The cofactor is iron-sulfur cluster.

In terms of biological role, required for insertion of 4Fe-4S clusters. This chain is Putative iron-sulfur cluster insertion protein ErpA, found in Cupriavidus metallidurans (strain ATCC 43123 / DSM 2839 / NBRC 102507 / CH34) (Ralstonia metallidurans).